Consider the following 96-residue polypeptide: Co-chaperonin GroES (96 aa).

This sequence belongs to the GroES chaperonin family. In terms of assembly, heptamer of 7 subunits arranged in a ring. Interacts with the chaperonin GroEL.

The protein resides in the cytoplasm. Its function is as follows. Together with the chaperonin GroEL, plays an essential role in assisting protein folding. The GroEL-GroES system forms a nano-cage that allows encapsulation of the non-native substrate proteins and provides a physical environment optimized to promote and accelerate protein folding. GroES binds to the apical surface of the GroEL ring, thereby capping the opening of the GroEL channel. In Solidesulfovibrio magneticus (strain ATCC 700980 / DSM 13731 / RS-1) (Desulfovibrio magneticus), this protein is Co-chaperonin GroES.